A 189-amino-acid polypeptide reads, in one-letter code: Isopentenyl-diphosphate Delta-isomerase (189 aa).

Mn(2+)-binding residues include H27 and H34. The Nudix hydrolase domain occupies 32 to 171 (PLHFAFSTYI…PFVFSPWLVD (140 aa)). C69 is an active-site residue. Mg(2+) is bound at residue C69. Mn(2+) is bound at residue H71. Residue E89 participates in Mg(2+) binding. Mn(2+)-binding residues include E119 and E121. E121 is a catalytic residue.

Belongs to the IPP isomerase type 1 family. Requires Mg(2+) as cofactor. The cofactor is Mn(2+).

It is found in the cytoplasm. The enzyme catalyses isopentenyl diphosphate = dimethylallyl diphosphate. It participates in isoprenoid biosynthesis; dimethylallyl diphosphate biosynthesis; dimethylallyl diphosphate from isopentenyl diphosphate: step 1/1. Its function is as follows. Catalyzes the 1,3-allylic rearrangement of the homoallylic substrate isopentenyl (IPP) to its highly electrophilic allylic isomer, dimethylallyl diphosphate (DMAPP). In Corynebacterium glutamicum (strain ATCC 13032 / DSM 20300 / JCM 1318 / BCRC 11384 / CCUG 27702 / LMG 3730 / NBRC 12168 / NCIMB 10025 / NRRL B-2784 / 534), this protein is Isopentenyl-diphosphate Delta-isomerase.